The sequence spans 677 residues: Fidgetin-like protein 1 (677 aa).

Over residues 203–216 the composition is skewed to polar residues; it reads TSSAPSGESTTATF. 3 disordered regions span residues 203–232, 249–324, and 337–378; these read TSSA…PQSF, VPSG…SFNG, and GIFG…TDDR. Lys-226 is covalently cross-linked (Glycyl lysine isopeptide (Lys-Gly) (interchain with G-Cter in SUMO2)). Residues 264 to 280 are compositionally biased toward polar residues; the sequence is DSDTINMLSNPTLNKAP. The segment covering 281–292 has biased composition (basic and acidic residues); the sequence is SKTEDSGQREDN. Lys-341 is subject to N6-acetyllysine. A compositionally biased stretch (polar residues) spans 347–358; that stretch reads SNKQDGSEQNGN. ATP contacts are provided by residues Ala-407 and 447 to 452; that span reads GTGKTL.

It belongs to the AAA ATPase family. As to quaternary structure, hexamer. Interacts (via N-terminal one-half region) with RAD51; the interaction is direct. Interacts (via N-terminal one-half region) with SPIDR (via the C-terminal region); the interaction is direct. Interacts with FIRRM; may regulate homologous recombination. Requires Mg(2+) as cofactor.

The protein resides in the nucleus. It is found in the cytoplasm. The protein localises to the perinuclear region. It carries out the reaction ATP + H2O = ADP + phosphate + H(+). Involved in DNA double-strand break (DBS) repair via homologous recombination (HR). Recruited at DSB sites independently of BRCA2, RAD51 and RAD51 paralogs in a H2AX-dependent manner. May regulate osteoblast proliferation and differentiation. May play a role in the control of male meiosis dynamic. The polypeptide is Fidgetin-like protein 1 (Fignl1) (Rattus norvegicus (Rat)).